Here is a 147-residue protein sequence, read N- to C-terminus: uncharacterized protein (147 aa).

Residues 3–23 (APMIGMVVLVVVLGLAVLALS) traverse the membrane as a helical segment.

To M.leprae ML1147.

It localises to the membrane. This is an uncharacterized protein from Mycobacterium tuberculosis (strain CDC 1551 / Oshkosh).